Reading from the N-terminus, the 613-residue chain is tRNA 5-methylaminomethyl-2-thiouridine biosynthesis bifunctional protein MnmC (613 aa).

Residues 1–225 form a tRNA (mnm(5)s(2)U34)-methyltransferase region; sequence MKKAKLIFKD…KREMIKAYLE (225 aa). Residues 252–613 form an FAD-dependent cmnm(5)s(2)U34 oxidoreductase region; sequence IGAGISSAVL…FLIRKLKKGL (362 aa).

The protein in the N-terminal section; belongs to the methyltransferase superfamily. tRNA (mnm(5)s(2)U34)-methyltransferase family. It in the C-terminal section; belongs to the DAO family. The cofactor is FAD.

It is found in the cytoplasm. The enzyme catalyses 5-aminomethyl-2-thiouridine(34) in tRNA + S-adenosyl-L-methionine = 5-methylaminomethyl-2-thiouridine(34) in tRNA + S-adenosyl-L-homocysteine + H(+). In terms of biological role, catalyzes the last two steps in the biosynthesis of 5-methylaminomethyl-2-thiouridine (mnm(5)s(2)U) at the wobble position (U34) in tRNA. Catalyzes the FAD-dependent demodification of cmnm(5)s(2)U34 to nm(5)s(2)U34, followed by the transfer of a methyl group from S-adenosyl-L-methionine to nm(5)s(2)U34, to form mnm(5)s(2)U34. In Campylobacter jejuni (strain RM1221), this protein is tRNA 5-methylaminomethyl-2-thiouridine biosynthesis bifunctional protein MnmC.